The chain runs to 250 residues: Ubiquitin-conjugating enzyme E2 6 (250 aa).

Residues 1–232 (MATKQAHKRL…DGKEPNDSSS (232 aa)) lie on the Cytoplasmic side of the membrane. In terms of domain architecture, UBC core spans 5–167 (QAHKRLTKEY…VQENVETLEK (163 aa)). Catalysis depends on cysteine 87, which acts as the Glycyl thioester intermediate. At serine 139 the chain carries Phosphoserine. At threonine 178 the chain carries Phosphothreonine. Positions 209–229 (AEQALRQSENNSKKDGKEPND) are disordered. A compositionally biased stretch (basic and acidic residues) spans 219 to 228 (NSKKDGKEPN). The chain crosses the membrane as a helical span at residues 233 to 249 (MVYIGIAIFLFLVGLFM).

The protein belongs to the ubiquitin-conjugating enzyme family.

It localises to the endoplasmic reticulum membrane. The enzyme catalyses S-ubiquitinyl-[E1 ubiquitin-activating enzyme]-L-cysteine + [E2 ubiquitin-conjugating enzyme]-L-cysteine = [E1 ubiquitin-activating enzyme]-L-cysteine + S-ubiquitinyl-[E2 ubiquitin-conjugating enzyme]-L-cysteine.. It functions in the pathway protein modification; protein ubiquitination. In terms of biological role, catalyzes the covalent attachment of ubiquitin to other proteins. Functions in degradation of misfolded or regulated proteins localized in the endoplasmic reticulum (ER) lumen or membrane via the ubiquitin-proteasome system. Cognate E2 conjugating enzyme for the DOA10 ubiquitin ligase complex, which is part of the ERAD-C pathway responsible for the rapid degradation of membrane proteins with misfolded cytoplasmic domains. The chain is Ubiquitin-conjugating enzyme E2 6 (UBC6) from Saccharomyces cerevisiae (strain ATCC 204508 / S288c) (Baker's yeast).